We begin with the raw amino-acid sequence, 404 residues long: Glucose-1-phosphate adenylyltransferase (404 aa).

Alpha-D-glucose 1-phosphate-binding positions include tyrosine 99, glycine 164, 179 to 180 (EK), and serine 197.

It belongs to the bacterial/plant glucose-1-phosphate adenylyltransferase family.

It catalyses the reaction alpha-D-glucose 1-phosphate + ATP + H(+) = ADP-alpha-D-glucose + diphosphate. Its pathway is capsule biogenesis; capsule polysaccharide biosynthesis. It functions in the pathway glycan biosynthesis; glycogen biosynthesis. Involved in the biosynthesis of ADP-glucose, a building block, required in the biosynthesis of maltose-1-phosphate (M1P) and in the elongation reactions to produce linear alpha-1,4-glucans. Catalyzes the reaction between ATP and alpha-D-glucose 1-phosphate (G1P) to produce pyrophosphate and ADP-Glc. This Mycobacterium marinum (strain ATCC BAA-535 / M) protein is Glucose-1-phosphate adenylyltransferase.